The primary structure comprises 249 residues: L-fucose operon activator (249 aa).

The 56-residue stretch at 1-56 (MNYRDELILQWVNQQGKASVIELAQHCDISVETIRRDLNKLANKGLLHRTHGGAVS) folds into the HTH deoR-type domain. The segment at residues 18 to 37 (ASVIELAQHCDISVETIRRD) is a DNA-binding region (H-T-H motif).

In terms of biological role, transcriptional activator of the fuc operon. This Haemophilus influenzae (strain ATCC 51907 / DSM 11121 / KW20 / Rd) protein is L-fucose operon activator (fucR).